Here is a 420-residue protein sequence, read N- to C-terminus: Glucose-1-phosphate adenylyltransferase (420 aa).

Alpha-D-glucose 1-phosphate is bound by residues tyrosine 97, glycine 162, 177–178 (EK), and serine 188.

The protein belongs to the bacterial/plant glucose-1-phosphate adenylyltransferase family. In terms of assembly, homotetramer.

The enzyme catalyses alpha-D-glucose 1-phosphate + ATP + H(+) = ADP-alpha-D-glucose + diphosphate. The protein operates within glycan biosynthesis; glycogen biosynthesis. Involved in the biosynthesis of ADP-glucose, a building block required for the elongation reactions to produce glycogen. Catalyzes the reaction between ATP and alpha-D-glucose 1-phosphate (G1P) to produce pyrophosphate and ADP-Glc. This Pseudothermotoga lettingae (strain ATCC BAA-301 / DSM 14385 / NBRC 107922 / TMO) (Thermotoga lettingae) protein is Glucose-1-phosphate adenylyltransferase.